Consider the following 201-residue polypeptide: ATP-dependent Clp protease proteolytic subunit (201 aa).

The active-site Nucleophile is Ser-100. His-125 is an active-site residue.

The protein belongs to the peptidase S14 family. As to quaternary structure, component of the chloroplastic Clp protease core complex.

The protein localises to the plastid. Its subcellular location is the chloroplast stroma. It carries out the reaction Hydrolysis of proteins to small peptides in the presence of ATP and magnesium. alpha-casein is the usual test substrate. In the absence of ATP, only oligopeptides shorter than five residues are hydrolyzed (such as succinyl-Leu-Tyr-|-NHMec, and Leu-Tyr-Leu-|-Tyr-Trp, in which cleavage of the -Tyr-|-Leu- and -Tyr-|-Trp bonds also occurs).. Cleaves peptides in various proteins in a process that requires ATP hydrolysis. Has a chymotrypsin-like activity. Plays a major role in the degradation of misfolded proteins. In Ranunculus macranthus (Large buttercup), this protein is ATP-dependent Clp protease proteolytic subunit.